A 406-amino-acid polypeptide reads, in one-letter code: Protein translocase subunit SecD (406 aa).

6 helical membrane-spanning segments follow: residues 8–28, 240–260, 262–282, 289–309, 334–354, and 361–381; these read IVIL…NPIN, MAAM…YRVA, FVAD…MCAI, PGIA…VIIF, FPAI…LFFF, and GFAV…IFIT.

This sequence belongs to the SecD/SecF family. SecD subfamily. Forms a complex with SecF. Part of the essential Sec protein translocation apparatus which comprises SecA, SecYEG and auxiliary proteins SecDF. Other proteins may also be involved.

The protein localises to the cell inner membrane. Its function is as follows. Part of the Sec protein translocase complex. Interacts with the SecYEG preprotein conducting channel. SecDF uses the proton motive force (PMF) to complete protein translocation after the ATP-dependent function of SecA. This Sebaldella termitidis (strain ATCC 33386 / NCTC 11300) protein is Protein translocase subunit SecD.